We begin with the raw amino-acid sequence, 392 residues long: MALKVATAAGGAVKAALRPALLWRPWEVLGSHEAPRRSFSQQTIPPSAKYGGRHTVTMIPGDGIGPELMLHVKSVFRHACVPVDFEEVHVSSTADEEDIRNAIMAIRRNRVALKGNIETNHNLPPSHKSRNNILRTSLDLYANVIHCKSLPGVVTRHRDIDILIVRENTEGEYSSLEHESVAGVVESLKIITKAKSLRIAEYAFQLAQESGRKKVTAVHKANIMKLGDGLFLQCCREVAARYPQITFENMIVDNTTMQLVSRPQQFDVMVMPNLYGNIVNNVCAGLVGGPGLVAGANYGHVYAVFETATRNTGKSIANKNIANPTATLLASCMMLDHLKLHSYATSIRKAVLASMDNENMHTPDIGGQGTTSEAIQDIIRHIRVINGRAVEA.

Residues Met-1 to Phe-39 constitute a mitochondrion transit peptide. Citrate contacts are provided by Thr-119 and Asn-132. Arg-135, Arg-166, and Asp-253 together coordinate substrate. Asp-253 lines the Mn(2+) pocket. ADP is bound by residues Asn-311, Thr-312, and Asn-323.

Belongs to the isocitrate and isopropylmalate dehydrogenases family. In terms of assembly, heterooligomer of subunits alpha (IDH3A), beta (IDH3B), and gamma (IDH3G) in the apparent ratio of 2:1:1. The heterodimer containing one IDH3A and one IDH3B subunit and the heterodimer containing one IDH3A and one IDH3G subunit assemble into a heterotetramer (which contains two subunits of IDH3A, one of IDH3B and one of IDH3G) and further into the heterooctamer. It depends on Mg(2+) as a cofactor. The cofactor is Mn(2+).

It localises to the mitochondrion. Its activity is regulated as follows. The heterotetramer and the heterodimer composed of IDH3A and IDH3G subunits can be allosterically activated by citrate (CIT) or/and ADP, and the two activators can act independently or synergistically. The heterodimer composed of IDH3A and IDH3B subunits cannot be allosterically regulated and the allosteric regulation of the heterotetramer is through the IDH3G subunit and not the IDH3B subunit. The IDH3G subunit contains the allosteric site which consists of a CIT-binding site and an ADP-binding site, and the binding of CIT and ADP causes conformational changes at the allosteric site which are transmitted to the active site in the catalytic subunit (IDH3A) through a cascade of conformational changes at the heterodimer interface, leading to stabilization of the isocitrate-binding at the active site and thus activation of the enzyme. ATP can activate the heterotetramer and the heterodimer composed of IDH3A and IDH3G subunits at low concentrations but inhibits their activities at high concentrations, whereas ATP exhibits only inhibitory effect on the heterodimer composed of IDH3A and IDH3B subunits. In terms of biological role, regulatory subunit which plays a role in the allosteric regulation of the enzyme catalyzing the decarboxylation of isocitrate (ICT) into alpha-ketoglutarate. The heterodimer composed of the alpha (IDH3A) and beta (IDH3B) subunits and the heterodimer composed of the alpha (IDH3A) and gamma (IDH3G) subunits, have considerable basal activity but the full activity of the heterotetramer (containing two subunits of IDH3A, one of IDH3B and one of IDH3G) requires the assembly and cooperative function of both heterodimers. The polypeptide is Isocitrate dehydrogenase [NAD] subunit gamma, mitochondrial (IDH3G) (Bos taurus (Bovine)).